The following is a 433-amino-acid chain: Putative ankyrin repeat protein R578 (433 aa).

ANK repeat units follow at residues 166–195, 197–224, 356–386, and 388–415; these read NKEIILRNAVITNNLEMLEFAIEKGAILSE, DHLIVQSIRTSNLDLIKYIFSHIDLSKL, VNPNILKTSIYCCNNFDITKYLIDNGADIHS, and PSLIKTAITSGNLKTATFLMDNGAICDE.

In Acanthamoeba polyphaga mimivirus (APMV), this protein is Putative ankyrin repeat protein R578.